The sequence spans 870 residues: DNA-directed RNA polymerase subunit Rpo1N (870 aa).

Zn(2+)-binding residues include Cys-60, Cys-63, Cys-70, His-73, Cys-100, Cys-103, Cys-146, and Cys-149. Asp-451, Asp-453, and Asp-455 together coordinate Mg(2+).

The protein belongs to the RNA polymerase beta' chain family. Part of the RNA polymerase complex. It depends on Mg(2+) as a cofactor. Zn(2+) serves as cofactor.

It is found in the cytoplasm. It catalyses the reaction RNA(n) + a ribonucleoside 5'-triphosphate = RNA(n+1) + diphosphate. In terms of biological role, DNA-dependent RNA polymerase (RNAP) catalyzes the transcription of DNA into RNA using the four ribonucleoside triphosphates as substrates. Forms the clamp head domain. The chain is DNA-directed RNA polymerase subunit Rpo1N from Methanothermobacter thermautotrophicus (strain ATCC 29096 / DSM 1053 / JCM 10044 / NBRC 100330 / Delta H) (Methanobacterium thermoautotrophicum).